We begin with the raw amino-acid sequence, 549 residues long: SH3 domain-containing protein 21 (549 aa).

Positions 1–56 are disordered; it reads MVQSELQLQPRAGRRADASNWGDFGSDKGGLGNTDIPPITPNSQRPPKLSNLTYDS. The span at 41 to 54 shows a compositional bias: polar residues; that stretch reads PNSQRPPKLSNLTY. One can recognise an SH3 domain in the interval 65–126; that stretch reads SCPETCRVLF…PDNFVIPPPP (62 aa). Disordered stretches follow at residues 142 to 303 and 332 to 479; these read PIKE…KPAK and FKKE…KSKN. A compositionally biased stretch (low complexity) spans 211–220; the sequence is QASQQHSASS. 2 stretches are compositionally biased toward basic and acidic residues: residues 267–280 and 332–342; these read PVPKKAPDSDKIPA and FKKEPSRDNDQ. 2 stretches are compositionally biased toward polar residues: residues 343–365 and 439–456; these read CQHLPQGGSTQRPESPAPSNNIQ and VLPQESAPTPQVPHTIQQ. Positions 482–510 form a coiled coil; the sequence is MDVLESLKEEVGLLRSRLELLELKLEQKM. The interval 528-549 is disordered; that stretch reads QMMQRNRKSFKHAETQTETQTE.

This Mus musculus (Mouse) protein is SH3 domain-containing protein 21 (Sh3d21).